Here is a 461-residue protein sequence, read N- to C-terminus: Argininosuccinate lyase (461 aa).

The protein belongs to the lyase 1 family. Argininosuccinate lyase subfamily.

It is found in the cytoplasm. It carries out the reaction 2-(N(omega)-L-arginino)succinate = fumarate + L-arginine. It participates in amino-acid biosynthesis; L-arginine biosynthesis; L-arginine from L-ornithine and carbamoyl phosphate: step 3/3. With respect to regulation, strongly inhibited by L-arginine. Inhibitory effects are lowered at pH 7.0 compared to those at pH 8.0. At 45 degrees Celsius and pH 8.0, activity decreases to 94%, 74% and 37% in the presence of 0.6 mM, 2.8 mM and 10 mM arginine, respectively. Activity also decreases to 86% in the presence of 10 mM sodium succinate or sodium citrate. Activity does not decrease in the presence of 1 mM or 10 mM L-lysine, which has a similar structure to arginine. Its function is as follows. Catalyzes the last step of arginine biosynthesis, the conversion of argininosuccinate into L-arginine and fumarate. The protein is Argininosuccinate lyase of Synechocystis sp. (strain ATCC 27184 / PCC 6803 / Kazusa).